The sequence spans 287 residues: 3-methyl-2-oxobutanoate hydroxymethyltransferase (287 aa).

2 residues coordinate Mg(2+): D57 and D96. Residues 57-58, D96, and K125 contribute to the 3-methyl-2-oxobutanoate site; that span reads DS. Mg(2+) is bound at residue E127. The active-site Proton acceptor is the E194.

It belongs to the PanB family. In terms of assembly, homodecamer; pentamer of dimers. The cofactor is Mg(2+).

Its subcellular location is the cytoplasm. The catalysed reaction is 3-methyl-2-oxobutanoate + (6R)-5,10-methylene-5,6,7,8-tetrahydrofolate + H2O = 2-dehydropantoate + (6S)-5,6,7,8-tetrahydrofolate. Its pathway is cofactor biosynthesis; (R)-pantothenate biosynthesis; (R)-pantoate from 3-methyl-2-oxobutanoate: step 1/2. Its function is as follows. Catalyzes the reversible reaction in which hydroxymethyl group from 5,10-methylenetetrahydrofolate is transferred onto alpha-ketoisovalerate to form ketopantoate. This chain is 3-methyl-2-oxobutanoate hydroxymethyltransferase, found in Methylobacterium sp. (strain 4-46).